The primary structure comprises 1250 residues: Immunoglobulin superfamily DCC subclass member 4 (1250 aa).

The first 24 residues, 1–24, serve as a signal peptide directing secretion; sequence MARGDAGRGRGLLALTFCLLAARG. Residues 25-957 lie on the Extracellular side of the membrane; that stretch reads ELLLPQETTV…SDSLDMHSVT (933 aa). 4 Ig-like C2-type domains span residues 29-137, 143-229, 242-330, and 335-421; these read PQET…TAVV, ADFS…ALLS, QDVV…AELR, and PAIT…ASLA. Residues cysteine 57 and cysteine 121 are joined by a disulfide bond. N-linked (GlcNAc...) asparagine glycosylation is found at asparagine 90, asparagine 102, and asparagine 157. A disulfide bridge links cysteine 164 with cysteine 212. Residue asparagine 252 is glycosylated (N-linked (GlcNAc...) asparagine). 2 cysteine pairs are disulfide-bonded: cysteine 265–cysteine 312 and cysteine 356–cysteine 405. 5 Fibronectin type-III domains span residues 431 to 525, 527 to 623, 632 to 741, 752 to 845, and 850 to 945; these read APTR…TLDD, PSAA…TPSM, APAE…APAP, PPAH…TLPD, and PPSD…TLQE. N-linked (GlcNAc...) asparagine glycosylation occurs at asparagine 582. Residues 958-978 traverse the membrane as a helical segment; the sequence is GIIVGVCLGLLCLLACMCAGL. The Cytoplasmic segment spans residues 979–1250; that stretch reads RRSPHRESLP…LPRSPVSSSA (272 aa). Position 995 is a phosphothreonine (threonine 995). Disordered stretches follow at residues 1140 to 1175 and 1215 to 1250; these read SASN…DPGQ and PGEV…SSSA.

Belongs to the immunoglobulin superfamily. DCC family.

The protein resides in the cell membrane. The polypeptide is Immunoglobulin superfamily DCC subclass member 4 (IGDCC4) (Homo sapiens (Human)).